Here is a 130-residue protein sequence, read N- to C-terminus: 3-aminoacrylate deaminase RutC (130 aa).

This sequence belongs to the RutC family.

The enzyme catalyses (Z)-3-aminoacrylate + H2O + H(+) = 3-oxopropanoate + NH4(+). In terms of biological role, involved in pyrimidine catabolism. Catalyzes the deamination of 3-aminoacrylate to malonic semialdehyde, a reaction that can also occur spontaneously. RutC may facilitate the reaction and modulate the metabolic fitness, rather than catalyzing essential functions. This chain is 3-aminoacrylate deaminase RutC, found in Methylorubrum extorquens (strain CM4 / NCIMB 13688) (Methylobacterium extorquens).